The primary structure comprises 1538 residues: Arf-GAP with Rho-GAP domain, ANK repeat and PH domain-containing protein 3 (1538 aa).

Positions 4 to 68 (PQDLDIAVWL…LRLLRAGSAE (65 aa)) constitute an SAM domain. Disordered regions lie at residues 72 to 97 (DSHLDNTMEPTPSPAPDAQPPKPVPK), 125 to 149 (SRNSECTQRSSPLLPSSSEQPSVPN), and 215 to 242 (ASDRRDGRGVCQERAEHRQDLETREDAG). Positions 82 to 97 (TPSPAPDAQPPKPVPK) are enriched in pro residues. The segment covering 216-241 (SDRRDGRGVCQERAEHRQDLETREDA) has biased composition (basic and acidic residues). PH domains are found at residues 282–374 (VPLL…SCLK) and 389–478 (RPLR…EAVT). The Arf-GAP domain occupies 479 to 606 (ETLSDYEVAE…LFRKPHPRHP (128 aa)). PH domains are found at residues 671–785 (ATYR…FSPL) and 795–901 (LLRM…AGGG). One can recognise a Rho-GAP domain in the interval 903 to 1084 (TGLQEQQMSR…ELIDGYISVF (182 aa)). The Ras-associating domain maps to 1113–1206 (GDLIMEVYIE…ASLLLRKVSM (94 aa)). In terms of domain architecture, PH 5 spans 1219-1321 (ESPRVGLLRC…WTTSILKAQH (103 aa)). Phosphothreonine is present on T1344. Y1399 and Y1404 each carry phosphotyrosine. Residues 1425-1439 (WSAKSDPSLTSQRSF) show a composition bias toward polar residues. The tract at residues 1425 to 1538 (WSAKSDPSLT…SNPPSSQPLT (114 aa)) is disordered. Residues S1438 and S1474 each carry the phosphoserine modification. Low complexity-rich tracts occupy residues 1476–1486 (EEQLLQELNNL) and 1494–1505 (ASCPESSSQPTS). Positions 1506-1529 (PQAPSPTSLPTPTPSLPTQPPCTS) are enriched in pro residues.

Interacts (via SAM domain) with INPPL1/SHIP2. In terms of processing, tyrosine phosphorylated at a low basal level. PDGF treatment stimulates phosphorylation. Tyrosine phosphorylation is increased in cells that are in the process of becoming attached to a substrate and that start spreading and flattening.

Its subcellular location is the cytoplasm. It localises to the cell membrane. The protein resides in the cytoskeleton. The protein localises to the cell projection. It is found in the lamellipodium. Its subcellular location is the ruffle. In terms of biological role, phosphatidylinositol 3,4,5-trisphosphate-dependent GTPase-activating protein that modulates actin cytoskeleton remodeling by regulating ARF and RHO family members. Is activated by phosphatidylinositol 3,4,5-trisphosphate (PtdIns(3,4,5)P3) binding. Can be activated by phosphatidylinositol 3,4-bisphosphate (PtdIns(3,4,5)P2) binding, albeit with lower efficiency. Acts preferentially on ARF5 and on RHOA. In Mus musculus (Mouse), this protein is Arf-GAP with Rho-GAP domain, ANK repeat and PH domain-containing protein 3 (Arap3).